The following is a 331-amino-acid chain: Ketol-acid reductoisomerase (NADP(+)) (331 aa).

The KARI N-terminal Rossmann domain occupies 2-182 (AQLFYDSDAD…GGTRAGILET (181 aa)). NADP(+) is bound by residues 25–28 (YGSQ), S51, S53, and 83–86 (DEFQ). The active site involves H108. An NADP(+)-binding site is contributed by G134. A KARI C-terminal knotted domain is found at 183–328 (NFKEETETDL…KGLRAMFSWL (146 aa)). Mg(2+) contacts are provided by D191, E195, E227, and E231. Residue S252 participates in substrate binding.

This sequence belongs to the ketol-acid reductoisomerase family. Mg(2+) is required as a cofactor.

The catalysed reaction is (2R)-2,3-dihydroxy-3-methylbutanoate + NADP(+) = (2S)-2-acetolactate + NADPH + H(+). It catalyses the reaction (2R,3R)-2,3-dihydroxy-3-methylpentanoate + NADP(+) = (S)-2-ethyl-2-hydroxy-3-oxobutanoate + NADPH + H(+). Its pathway is amino-acid biosynthesis; L-isoleucine biosynthesis; L-isoleucine from 2-oxobutanoate: step 2/4. It functions in the pathway amino-acid biosynthesis; L-valine biosynthesis; L-valine from pyruvate: step 2/4. In terms of biological role, involved in the biosynthesis of branched-chain amino acids (BCAA). Catalyzes an alkyl-migration followed by a ketol-acid reduction of (S)-2-acetolactate (S2AL) to yield (R)-2,3-dihydroxy-isovalerate. In the isomerase reaction, S2AL is rearranged via a Mg-dependent methyl migration to produce 3-hydroxy-3-methyl-2-ketobutyrate (HMKB). In the reductase reaction, this 2-ketoacid undergoes a metal-dependent reduction by NADPH to yield (R)-2,3-dihydroxy-isovalerate. The sequence is that of Ketol-acid reductoisomerase (NADP(+)) from Prochlorococcus marinus (strain MIT 9313).